Consider the following 391-residue polypeptide: UPF0229 protein CLH_2838 (391 aa).

2 disordered regions span residues methionine 1–arginine 23 and valine 75–glutamate 107. The span at glycine 80–serine 92 shows a compositional bias: basic and acidic residues.

This sequence belongs to the UPF0229 family.

The chain is UPF0229 protein CLH_2838 from Clostridium botulinum (strain Alaska E43 / Type E3).